The sequence spans 165 residues: Phosphopantetheine adenylyltransferase (165 aa).

Thr9 lines the substrate pocket. Residues 9 to 10 (TF) and His17 each bind ATP. 3 residues coordinate substrate: Lys41, Leu78, and Arg92. ATP-binding positions include 93-95 (GLR), Glu103, and 128-134 (HQAIASK).

It belongs to the bacterial CoaD family. Homohexamer. Mg(2+) serves as cofactor.

It localises to the cytoplasm. The catalysed reaction is (R)-4'-phosphopantetheine + ATP + H(+) = 3'-dephospho-CoA + diphosphate. It functions in the pathway cofactor biosynthesis; coenzyme A biosynthesis; CoA from (R)-pantothenate: step 4/5. In terms of biological role, reversibly transfers an adenylyl group from ATP to 4'-phosphopantetheine, yielding dephospho-CoA (dPCoA) and pyrophosphate. This is Phosphopantetheine adenylyltransferase from Ruegeria sp. (strain TM1040) (Silicibacter sp.).